A 312-amino-acid polypeptide reads, in one-letter code: Cobalamin biosynthesis protein CobD (312 aa).

The next 4 membrane-spanning stretches (helical) occupy residues I61 to L81, I83 to A103, D152 to Y172, and G292 to A312.

The protein belongs to the CobD/CbiB family.

It is found in the cell membrane. The protein operates within cofactor biosynthesis; adenosylcobalamin biosynthesis. Its function is as follows. Converts cobyric acid to cobinamide by the addition of aminopropanol on the F carboxylic group. This chain is Cobalamin biosynthesis protein CobD, found in Chromobacterium violaceum (strain ATCC 12472 / DSM 30191 / JCM 1249 / CCUG 213 / NBRC 12614 / NCIMB 9131 / NCTC 9757 / MK).